Reading from the N-terminus, the 69-residue chain is Omega-oxotoxin-Ol1a (69 aa).

The region spanning 1–68 is the Oxytoxin-type inhibitor cystine knot (ICK) domain; the sequence is DWECLPLHSS…GKINTCDKYK (68 aa). Cystine bridges form between Cys4–Cys18, Cys11–Cys23, Cys15–Cys64, Cys17–Cys52, and Cys25–Cys50. Residue Asn69 is modified to Asparagine amide.

This sequence belongs to the spiderine family. Spiderine subfamily. As to expression, expressed by the venom gland.

It localises to the secreted. Functionally, weak blocker of vertebrate P/Q-, N- and L-type voltage-gated calcium channels (Cav1 and Cav2). Is both paralytic and lethal when injected into lepidopteran larvae. Is not toxic to mice. The protein is Omega-oxotoxin-Ol1a of Oxyopes lineatus (Lynx spider).